The chain runs to 196 residues: Rho-related protein racL (196 aa).

10 to 17 is a binding site for GTP; the sequence is GDGAVGKT. The short motif at 32 to 40 is the Effector region element; it reads YQPTVFDNF. GTP is bound by residues 57 to 61 and 116 to 119; these read DTAGQ and TQND. Position 193 is a cysteine methyl ester (Cys-193). Cys-193 is lipidated: S-geranylgeranyl cysteine. Residues 194–196 constitute a propeptide, removed in mature form; it reads IIL.

It belongs to the small GTPase superfamily. Rho family.

The protein resides in the cell membrane. This chain is Rho-related protein racL (racL), found in Dictyostelium discoideum (Social amoeba).